The primary structure comprises 203 residues: Small ribosomal subunit protein uS4 (203 aa).

The interval 22–45 (TGKELARRPYKPGQHGPNSRGKVS) is disordered. The region spanning 93-156 (QRLDNVVYRL…QNISTIKEAV (64 aa)) is the S4 RNA-binding domain.

This sequence belongs to the universal ribosomal protein uS4 family. As to quaternary structure, part of the 30S ribosomal subunit. Contacts protein S5. The interaction surface between S4 and S5 is involved in control of translational fidelity.

One of the primary rRNA binding proteins, it binds directly to 16S rRNA where it nucleates assembly of the body of the 30S subunit. In terms of biological role, with S5 and S12 plays an important role in translational accuracy. This is Small ribosomal subunit protein uS4 from Enterococcus faecalis (strain ATCC 700802 / V583).